The primary structure comprises 926 residues: OTU domain-containing protein 7A (926 aa).

A disordered region spans residues 75 to 99 (PHVFNEGRGPKQPEREPQPGHKVER). The span at 82 to 99 (RGPKQPEREPQPGHKVER) shows a compositional bias: basic and acidic residues. S119 bears the Phosphoserine mark. The tract at residues 168 to 410 (ERDLIEQATM…AVDPGKDWEW (243 aa)) is TRAF-binding. The interval 183 to 449 (AGRLNWWSTV…VTWIRIPSET (267 aa)) is catalytic. Positions 199–374 (LLPLATTGDG…QAHFSALVSM (176 aa)) constitute an OTU domain. The active site involves D207. C210 (nucleophile) is an active-site residue. H367 serves as the catalytic Proton acceptor. 3 disordered regions span residues 452 to 514 (PLAQ…DSVA), 537 to 613 (GLVH…DAWK), and 668 to 768 (EQEQ…APAR). Residues 481-491 (VCSNSNSNNGK) show a composition bias toward low complexity. The span at 492–510 (NGKDKEKEKQRKEKDKTRA) shows a compositional bias: basic and acidic residues. A Nuclear localization signal motif is present at residues 494–509 (KDKEKEKQRKEKDKTR). Low complexity-rich tracts occupy residues 576 to 592 (GASA…PSPT), 677 to 691 (ATAA…AATA), and 729 to 742 (PAAG…AGGT). Omega-N-methylarginine is present on R880. The A20-type zinc-finger motif lies at 884–919 (GPVQRRCQRENCAFYGRAETEHYCSYCYREELRRRR). Zn(2+)-binding residues include C890, C895, C907, and C910.

Belongs to the peptidase C64 family.

Its subcellular location is the cytoplasm. It localises to the nucleus. It catalyses the reaction Thiol-dependent hydrolysis of ester, thioester, amide, peptide and isopeptide bonds formed by the C-terminal Gly of ubiquitin (a 76-residue protein attached to proteins as an intracellular targeting signal).. Deubiquitinase, which cleaves 'Lys-11'-linked polyubiquitin chains. Might be required for PA28-20S proteasome assembly. This Homo sapiens (Human) protein is OTU domain-containing protein 7A (OTUD7A).